The primary structure comprises 464 residues: Mitogen-activated protein kinase 10 (464 aa).

Residues 64 to 359 enclose the Protein kinase domain; the sequence is YQNLKPIGSG…VDDALQHPYI (296 aa). Residues 70 to 78 and lysine 93 contribute to the ATP site; that span reads IGSGAQGIV. Aspartate 189 serves as the catalytic Proton acceptor. Position 221 is a phosphothreonine; by MAP2K7 (threonine 221). The TXY motif lies at 221-223; it reads TPY. Position 223 is a phosphotyrosine; by MAP2K4 (tyrosine 223). Residues 405-464 form a disordered region; sequence TKNGVVKSQPSPSGAAVNSSESLPPSSAVNDISSMSTDQTLASDTDSSLEASAGPLGCCR. The segment covering 410 to 454 has biased composition (polar residues); sequence VKSQPSPSGAAVNSSESLPPSSAVNDISSMSTDQTLASDTDSSLE. Residues cysteine 462 and cysteine 463 are each lipidated (S-palmitoyl cysteine).

This sequence belongs to the protein kinase superfamily. CMGC Ser/Thr protein kinase family. MAP kinase subfamily. As to quaternary structure, interacts with MAPK8IP1/JIP-1, MAPK8IP3/JIP-3/JSAP1 and SPAG9/MAPK8IP4/JIP4. Interacts with HDAC9 and MAPKBP1. Interacts with ARRB2; the interaction enhances MAPK10 activation by MAP3K5. Interacts with SARM1. Interacts with JUND; interaction is inhibited in the presence of MEN1. The cofactor is Mg(2+). In terms of processing, dually phosphorylated on Thr-221 and Tyr-223 by MAP2K4 and MAP2K7, which activates the enzyme. MAP2K7 shows a strong preference for Thr-221 while MAP2K4 phosphorylates Tyr-223 preferentially. Weakly autophosphorylated on threonine and tyrosine residues in vitro. Post-translationally, palmitoylation regulates subcellular location and axonal development. As to expression, brain (at protein level). Expressed specifically in neurons of the hippocampus, cortex, cerebellum, brainstem, and spinal cord. Seems to be also found in testis, and very weakly in the heart.

It is found in the cytoplasm. The protein localises to the membrane. Its subcellular location is the nucleus. It localises to the mitochondrion. It catalyses the reaction L-seryl-[protein] + ATP = O-phospho-L-seryl-[protein] + ADP + H(+). The enzyme catalyses L-threonyl-[protein] + ATP = O-phospho-L-threonyl-[protein] + ADP + H(+). Its activity is regulated as follows. Activated by threonine and tyrosine phosphorylation by two dual specificity kinases, MAP2K4 and MAP2K7. MAP2K7 phosphorylates MAPK10 on Thr-221 causing a conformational change and a large increase in Vmax for the enzyme. MAP2K4 then phosphorylates Tyr-223 resulting in a further increase in Vmax. Inhibited by dual specificity phosphatases, such as DUSP1. Inhibited by HDAC9. Serine/threonine-protein kinase involved in various processes such as neuronal proliferation, differentiation, migration and programmed cell death. Extracellular stimuli such as pro-inflammatory cytokines or physical stress stimulate the stress-activated protein kinase/c-Jun N-terminal kinase (SAP/JNK) signaling pathway. In this cascade, two dual specificity kinases MAP2K4/MKK4 and MAP2K7/MKK7 phosphorylate and activate MAPK10/JNK3. In turn, MAPK10/JNK3 phosphorylates a number of transcription factors, primarily components of AP-1 such as JUN and ATF2 and thus regulates AP-1 transcriptional activity. Plays regulatory roles in the signaling pathways during neuronal apoptosis. Phosphorylates the neuronal microtubule regulator STMN2. Acts in the regulation of the amyloid-beta precursor protein/APP signaling during neuronal differentiation by phosphorylating APP. Also participates in neurite growth in spiral ganglion neurons. Phosphorylates the CLOCK-BMAL1 heterodimer and plays a role in the photic regulation of the circadian clock. Phosphorylates JUND and this phosphorylation is inhibited in the presence of MEN1. This Mus musculus (Mouse) protein is Mitogen-activated protein kinase 10 (Mapk10).